Here is a 69-residue protein sequence, read N- to C-terminus: Large ribosomal subunit protein bL31 (69 aa).

Cys16, Cys18, Cys36, and Cys39 together coordinate Zn(2+).

This sequence belongs to the bacterial ribosomal protein bL31 family. Type A subfamily. In terms of assembly, part of the 50S ribosomal subunit. Zn(2+) serves as cofactor.

In terms of biological role, binds the 23S rRNA. This is Large ribosomal subunit protein bL31 from Ruminiclostridium cellulolyticum (strain ATCC 35319 / DSM 5812 / JCM 6584 / H10) (Clostridium cellulolyticum).